Here is a 381-residue protein sequence, read N- to C-terminus: Alcohol dehydrogenase class-3 (381 aa).

Zn(2+) is bound at residue Cys49. His50 lines the NAD(+) pocket. The an alcohol site is built by Thr51 and His71. Zn(2+) is bound by residues His71, Glu72, Cys101, Cys104, Cys107, Cys115, and Cys179. NAD(+) contacts are provided by residues Gly204 to Gly209, Asp228, Lys233, Ile274, Val297 to Val299, Thr322 to Phe324, and Arg374.

The protein belongs to the zinc-containing alcohol dehydrogenase family. Class-III subfamily. Homodimer. The cofactor is Zn(2+).

Its subcellular location is the cytoplasm. It carries out the reaction a primary alcohol + NAD(+) = an aldehyde + NADH + H(+). The enzyme catalyses a secondary alcohol + NAD(+) = a ketone + NADH + H(+). It catalyses the reaction S-(hydroxymethyl)glutathione + NADP(+) = S-formylglutathione + NADPH + H(+). The catalysed reaction is S-(hydroxymethyl)glutathione + NAD(+) = S-formylglutathione + NADH + H(+). In Oryza sativa subsp. japonica (Rice), this protein is Alcohol dehydrogenase class-3.